A 340-amino-acid chain; its full sequence is Uroporphyrinogen decarboxylase (340 aa).

Substrate contacts are provided by residues 21–25 (RQAGR), D71, Y148, S203, and H316.

It belongs to the uroporphyrinogen decarboxylase family. Homodimer.

The protein localises to the cytoplasm. It catalyses the reaction uroporphyrinogen III + 4 H(+) = coproporphyrinogen III + 4 CO2. It functions in the pathway porphyrin-containing compound metabolism; protoporphyrin-IX biosynthesis; coproporphyrinogen-III from 5-aminolevulinate: step 4/4. Its function is as follows. Catalyzes the decarboxylation of four acetate groups of uroporphyrinogen-III to yield coproporphyrinogen-III. The sequence is that of Uroporphyrinogen decarboxylase from Campylobacter concisus (strain 13826).